The following is a 778-amino-acid chain: NAD-dependent deacetylase sir2B (778 aa).

ANK repeat units follow at residues 83–112 (LNWT…EISI), 114–142 (RYTA…VPNG), 148–178 (DMET…SMNS), 191–221 (HGVS…DINS), 225–255 (DNST…ELMN), 260–289 (YGNS…KIII), 317–354 (DGST…QVNG), 358–390 (GNAT…DPTI), and 394–423 (YGWT…LTNS). The interval 438 to 458 (SSTSTSSSSSSSSSSSSSSSS) is disordered. A Deacetylase sirtuin-type domain is found at 465 to 778 (KEELKLKGIE…DYFNTLFNSF (314 aa)). The Proton acceptor role is filled by H608. Zn(2+) is bound by residues C616, C619, C642, and C647. A disordered region spans residues 727–746 (KLKQQQENESGESSNDNDNN). The span at 733–746 (ENESGESSNDNDNN) shows a compositional bias: low complexity.

It belongs to the sirtuin family. Zn(2+) is required as a cofactor.

The catalysed reaction is N(6)-acetyl-L-lysyl-[protein] + NAD(+) + H2O = 2''-O-acetyl-ADP-D-ribose + nicotinamide + L-lysyl-[protein]. In terms of biological role, NAD-dependent deacetylase, which plays an important role in the regulation of transcriptional repression. The polypeptide is NAD-dependent deacetylase sir2B (sir2B) (Dictyostelium discoideum (Social amoeba)).